A 308-amino-acid chain; its full sequence is RING-H2 finger protein ATL63 (308 aa).

A helical membrane pass occupies residues 29–49 (VLLAALVFLLLVVLFVLLLHF). Residues 138–180 (CVICLGLWEAGDFGRKLRNCGHGFHVECIDMWLSSHSTCPLCR) form an RING-type; atypical zinc finger. Residues 252 to 308 (VFDDDEEINDGGTRSDRRRSMSMTSSASSSLMRMLSSSSSRSERNKVFPTARQDSSK) are disordered. Low complexity predominate over residues 272-291 (MSMTSSASSSLMRMLSSSSS).

The protein belongs to the RING-type zinc finger family. ATL subfamily.

The protein resides in the membrane. It catalyses the reaction S-ubiquitinyl-[E2 ubiquitin-conjugating enzyme]-L-cysteine + [acceptor protein]-L-lysine = [E2 ubiquitin-conjugating enzyme]-L-cysteine + N(6)-ubiquitinyl-[acceptor protein]-L-lysine.. The protein operates within protein modification; protein ubiquitination. The chain is RING-H2 finger protein ATL63 (ATL63) from Arabidopsis thaliana (Mouse-ear cress).